We begin with the raw amino-acid sequence, 196 residues long: Putative NADH dehydrogenase/NAD(P)H nitroreductase Smlt0482 (196 aa).

This sequence belongs to the nitroreductase family. HadB/RutE subfamily. Requires FMN as cofactor.

This is Putative NADH dehydrogenase/NAD(P)H nitroreductase Smlt0482 from Stenotrophomonas maltophilia (strain K279a).